Here is a 302-residue protein sequence, read N- to C-terminus: Rab effector Noc2 (302 aa).

The 118-residue stretch at 41-158 (QRRSQCLSPG…KRSGAWFYKG (118 aa)) folds into the RabBD domain. Residues 89 to 146 (GNGLSQCLLCGEVLGFLGSSSVFCKDCRKKVCTKCGIEASPGQKRPLWLCKICSEQRE) form an FYVE-type zinc finger. Residues Cys-95, Cys-98, Cys-112, Cys-115, Cys-120, Cys-123, Cys-138, and Cys-141 each contribute to the Zn(2+) site. The segment at 174–302 (DPHFRPLPVE…KRHTWATPRY (129 aa)) is disordered. The span at 185-197 (TETQPPSAETSRV) shows a compositional bias: polar residues. Position 248 is a phosphoserine (Ser-248). The span at 258–269 (SHLSGSQSSLGS) shows a compositional bias: low complexity.

Recruited to dense-core vesicles through specific interaction with RAB27A in endocrine cells. Interacts with RAB3A, RAB3B, RAB3C and RAB3D. Interacts with ZYX. In terms of tissue distribution, highly expressed in pancreatic islets. High to moderate expression in adrenal gland, pituitary gland and ovary.

It is found in the cytoplasm. The protein localises to the cytoplasmic vesicle. The protein resides in the secretory vesicle membrane. Its function is as follows. Rab GTPase effector involved in the late steps of regulated exocytosis, both in endocrine and exocrine cells. Regulates the exocytosis of dense-core vesicles in neuroendocrine cells through interaction with RAB27A. Acts as a potential RAB3B effector protein in epithelial cells. The sequence is that of Rab effector Noc2 (Rph3al) from Mus musculus (Mouse).